We begin with the raw amino-acid sequence, 509 residues long: Dihydrolipoyl dehydrogenase, mitochondrial (509 aa).

A mitochondrion-targeting transit peptide spans 1 to 35; sequence MQSWSRVYCSLAKKGHFNRLSHGLQGASSVPLRTY. K66 bears the N6-acetyllysine; alternate mark. K66 bears the N6-succinyllysine; alternate mark. FAD is bound by residues 71–80 and K89; that span reads EKNETLGGTC. The cysteines at positions 80 and 85 are disulfide-linked. Residues K104, K122, K132, and K143 each carry the N6-acetyllysine; alternate modification. N6-succinyllysine; alternate is present on residues K104, K122, K132, and K143. G154 contacts FAD. K159 bears the N6-succinyllysine mark. 183 to 185 is an FAD binding site; the sequence is TGS. Residues 220–227 and E243 contribute to the NAD(+) site; that span reads GAGVIGVE. N6-succinyllysine is present on residues K273 and K277. V278 provides a ligand contact to NAD(+). A phosphoserine mark is found at S285 and S297. G314 is a binding site for NAD(+). The residue at position 346 (K346) is an N6-acetyllysine. Residues D355 and 361 to 364 contribute to the FAD site; that span reads MLAH. An N6-acetyllysine; alternate modification is found at K410. Position 410 is an N6-succinyllysine; alternate (K410). K417 and K420 each carry N6-acetyllysine. The residue at position 430 (K430) is an N6-succinyllysine. H487 serves as the catalytic Proton acceptor. At S502 the chain carries Phosphoserine. K505 is subject to N6-acetyllysine; alternate. An N6-succinyllysine; alternate modification is found at K505.

This sequence belongs to the class-I pyridine nucleotide-disulfide oxidoreductase family. Homodimer. Part of the multimeric pyruvate dehydrogenase complex that contains multiple copies of pyruvate dehydrogenase (subunits PDHA (PDHA1 or PDHA2) and PDHB, E1), dihydrolipoamide acetyltransferase (DLAT, E2) and lipoamide dehydrogenase (DLD, E3). These subunits are bound to an inner core composed of about 48 DLAT and 12 PDHX molecules (by non covalent bonds). The 2-oxoglutarate dehydrogenase complex is composed of OGDH (2-oxoglutarate dehydrogenase; E1), DLST (dihydrolipoamide succinyltransferase; E2), DLD (dihydrolipoamide dehydrogenase; E3) and the assembly factor KGD4. It contains multiple copies of the three enzymatic components (E1, E2 and E3). In the nucleus, the 2-oxoglutarate dehydrogenase complex associates with KAT2A. Interacts with PDHX. The cofactor is FAD. Post-translationally, tyrosine phosphorylated.

The protein resides in the mitochondrion matrix. Its subcellular location is the nucleus. The protein localises to the cell projection. It is found in the cilium. It localises to the flagellum. The protein resides in the cytoplasmic vesicle. Its subcellular location is the secretory vesicle. The protein localises to the acrosome. The catalysed reaction is N(6)-[(R)-dihydrolipoyl]-L-lysyl-[protein] + NAD(+) = N(6)-[(R)-lipoyl]-L-lysyl-[protein] + NADH + H(+). Its function is as follows. Lipoamide dehydrogenase is a component of the glycine cleavage system as well as an E3 component of three alpha-ketoacid dehydrogenase complexes (pyruvate-, alpha-ketoglutarate-, and branched-chain amino acid-dehydrogenase complex). The 2-oxoglutarate dehydrogenase complex is mainly active in the mitochondrion. A fraction of the 2-oxoglutarate dehydrogenase complex also localizes in the nucleus and is required for lysine succinylation of histones: associates with KAT2A on chromatin and provides succinyl-CoA to histone succinyltransferase KAT2A. In monomeric form may have additional moonlighting function as serine protease. Involved in the hyperactivation of spermatazoa during capacitation and in the spermatazoal acrosome reaction. This Rattus norvegicus (Rat) protein is Dihydrolipoyl dehydrogenase, mitochondrial (Dld).